Here is a 78-residue protein sequence, read N- to C-terminus: RNA-binding protein Hfq (78 aa).

The Sm domain maps to 10-69 (DPFLNTLRKEHVPVSIYLVNGIKLQGQIESFDQYVVLLRNTVTQMVYKHAISTVVPARAV).

This sequence belongs to the Hfq family. Homohexamer.

Functionally, RNA chaperone that binds small regulatory RNA (sRNAs) and mRNAs to facilitate mRNA translational regulation in response to envelope stress, environmental stress and changes in metabolite concentrations. Also binds with high specificity to tRNAs. This Bordetella bronchiseptica (strain ATCC BAA-588 / NCTC 13252 / RB50) (Alcaligenes bronchisepticus) protein is RNA-binding protein Hfq.